Reading from the N-terminus, the 656-residue chain is ATP-dependent zinc metalloprotease FtsH (656 aa).

Over 1-10 (MGDNRWLKNS) the chain is Cytoplasmic. Residues 11–31 (FVYLIILVAALALFFQYLGPG) form a helical membrane-spanning segment. Residues 32–116 (ASQTEEKGIA…IVQPAPAWGG (85 aa)) lie on the Extracellular side of the membrane. The chain crosses the membrane as a helical span at residues 117-137 (LLSIFTILLPTLLLIGFFVFF). Residues 138 to 656 (MRQAQGSNNQ…GLGGPSPLPA (519 aa)) lie on the Cytoplasmic side of the membrane. Position 209–216 (209–216 (GPPGTGKT)) interacts with ATP. A Zn(2+)-binding site is contributed by histidine 432. Glutamate 433 is a catalytic residue. Zn(2+) is bound by residues histidine 436 and aspartate 511. Residues 622–632 (FSKSGSTTPNG) show a composition bias toward polar residues. Residues 622–656 (FSKSGSTTPNGRTEDRPAQPDAPQMGLGGPSPLPA) form a disordered region.

It in the central section; belongs to the AAA ATPase family. In the C-terminal section; belongs to the peptidase M41 family. In terms of assembly, homohexamer. It depends on Zn(2+) as a cofactor.

The protein resides in the cell membrane. Acts as a processive, ATP-dependent zinc metallopeptidase for both cytoplasmic and membrane proteins. Plays a role in the quality control of integral membrane proteins. The protein is ATP-dependent zinc metalloprotease FtsH of Chloroflexus aggregans (strain MD-66 / DSM 9485).